Reading from the N-terminus, the 473-residue chain is H(+)/Cl(-) exchange transporter ClcA (473 aa).

The Cytoplasmic segment spans residues 1–32 (MKTDTPSLETPQAARLRRRQLIRQLLERDKTP). Residues 33–69 (LAILFMAAVVGTLVGLAAVAFDKGVAWLQNQRMGALV) traverse the membrane as a helical segment. At 70–76 (HTADNYP) the chain is on the periplasmic side. The chain crosses the membrane as a helical span at residues 77–100 (LLLTVAFLCSAVLAMFGYFLVRKY). Residues 106–110 (GSGIP) carry the Selectivity filter part_1 motif. Ser-107 lines the chloride pocket. Positions 109 to 116 (IPEIEGAL) form an intramembrane region, helical. Residues 117-123 (EDQRPVR) are Cytoplasmic-facing. Transmembrane regions (helical) follow at residues 124 to 141 (WWRV…TLGG) and 148 to 166 (EGPT…LDIF). A Selectivity filter part_2 motif is present at residues 146–150 (GREGP). Topologically, residues 167–176 (RLKGDEARHT) are cytoplasmic. 2 consecutive intramembrane regions (helical) follow at residues 177–189 (LLAT…LAAA) and 193–201 (PLAGILFII). The Cytoplasmic portion of the chain corresponds to 202–214 (EEMRPQFRYTLIS). Residues 215–232 (IKAVFIGVIMSTIMYRIF) traverse the membrane as a helical segment. At 233–252 (NHEVALIDVGKLSDAPLNTQ) the chain is on the periplasmic side. Residues 253–281 (WLYLILGIIFGIFGPIFNKWVLGMQDLLH) form a helical membrane-spanning segment. The Cytoplasmic portion of the chain corresponds to 282–287 (RVHGGN). Residues 288 to 309 (ITKWVLMGGAIGGLCGLLGFVA) traverse the membrane as a helical segment. At 310–329 (PATSGGGFNLIPIATAGNFS) the chain is on the periplasmic side. Transmembrane regions (helical) follow at residues 330–349 (MGML…LCFS) and 355–376 (GIFA…MVVV). The Selectivity filter part_3 motif lies at 355–359 (GIFAP). Positions 356 and 357 each coordinate chloride. Residues 377–386 (ELFPQYHLEA) are Periplasmic-facing. An intramembrane region (helical) is located at residues 387–401 (GTFAIAGMGALLAAS). Positions 402–404 (IRA) form an intramembrane region, note=Loop between two helices. Residues 405 to 416 (PLTGIILVLEMT) constitute an intramembrane region (helical). The note=Loop between two helices intramembrane region spans 417 to 421 (DNYQL). A helical transmembrane segment spans residues 422–438 (ILPMIITGLGATLLAQF). Over 439–473 (TGGKPLYSAILARTLAKQEAEQLARSKAASASENT) the chain is Cytoplasmic. A chloride-binding site is contributed by Tyr-445.

Belongs to the chloride channel (TC 2.A.49) family. ClcA subfamily. Homodimer.

The protein localises to the cell inner membrane. It catalyses the reaction 2 chloride(in) + H(+)(out) = 2 chloride(out) + H(+)(in). Proton-coupled chloride transporter. Functions as antiport system and exchanges two chloride ions for 1 proton. Probably acts as an electrical shunt for an outwardly-directed proton pump that is linked to amino acid decarboxylation, as part of the extreme acid resistance (XAR) response. The polypeptide is H(+)/Cl(-) exchange transporter ClcA (Shigella boydii serotype 18 (strain CDC 3083-94 / BS512)).